Here is a 210-residue protein sequence, read N- to C-terminus: Protein-methionine-sulfoxide reductase heme-binding subunit MsrQ (210 aa).

6 helical membrane passes run 8–28 (LAVF…AWIF), 37–57 (VLVE…LSMT), 75–95 (LGLW…LFIL), 110–130 (PYII…VTSN), 147–167 (IIYV…RADL), and 169–189 (EWAL…PVFA).

This sequence belongs to the MsrQ family. Heterodimer of a catalytic subunit (MsrP) and a heme-binding subunit (MsrQ). FMN is required as a cofactor. The cofactor is heme b.

The protein resides in the cell inner membrane. Its function is as follows. Part of the MsrPQ system that repairs oxidized periplasmic proteins containing methionine sulfoxide residues (Met-O), using respiratory chain electrons. Thus protects these proteins from oxidative-stress damage caused by reactive species of oxygen and chlorine generated by the host defense mechanisms. MsrPQ is essential for the maintenance of envelope integrity under bleach stress, rescuing a wide series of structurally unrelated periplasmic proteins from methionine oxidation. MsrQ provides electrons for reduction to the reductase catalytic subunit MsrP, using the quinone pool of the respiratory chain. In Pseudomonas syringae pv. syringae (strain B728a), this protein is Protein-methionine-sulfoxide reductase heme-binding subunit MsrQ.